Consider the following 876-residue polypeptide: Alanine--tRNA ligase (876 aa).

4 residues coordinate Zn(2+): H564, H568, C666, and H670.

It belongs to the class-II aminoacyl-tRNA synthetase family. Zn(2+) is required as a cofactor.

It localises to the cytoplasm. The catalysed reaction is tRNA(Ala) + L-alanine + ATP = L-alanyl-tRNA(Ala) + AMP + diphosphate. Catalyzes the attachment of alanine to tRNA(Ala) in a two-step reaction: alanine is first activated by ATP to form Ala-AMP and then transferred to the acceptor end of tRNA(Ala). Also edits incorrectly charged Ser-tRNA(Ala) and Gly-tRNA(Ala) via its editing domain. The protein is Alanine--tRNA ligase of Porphyromonas gingivalis (strain ATCC BAA-308 / W83).